A 160-amino-acid chain; its full sequence is Small ribosomal subunit protein uS9 (160 aa).

The protein belongs to the universal ribosomal protein uS9 family.

In Rhodopseudomonas palustris (strain ATCC BAA-98 / CGA009), this protein is Small ribosomal subunit protein uS9.